The following is a 197-amino-acid chain: TLE family member 5 (197 aa).

Residues 166 to 197 are CCN domain; the sequence is LSALGSQAHLSKEDKNGHDGDTHQEDDGEKSD. The disordered stretch occupies residues 174–197; it reads HLSKEDKNGHDGDTHQEDDGEKSD. Basic and acidic residues predominate over residues 175-197; sequence LSKEDKNGHDGDTHQEDDGEKSD. S196 is modified (phosphoserine).

This sequence belongs to the WD repeat Groucho/TLE family. Homooligomer and heterooligomer with other family members. Binds TCF7. Binds the NF-kappa-B subunit RELA. Interacts with PHF12. Interacts (via Q domain) with SIX3. Interacts with SIX6. Post-translationally, ubiquitinated by XIAP/BIRC4. In terms of tissue distribution, found predominantly in muscle, heart and Placenta. In fetal tissues, abundantly expressed in the heart, lung, kidney, brain and liver.

The protein resides in the nucleus. Transcriptional corepressor. Acts as a dominant repressor towards other family members. Inhibits NF-kappa-B-regulated gene expression. May be required for the initiation and maintenance of the differentiated state. Essential for the transcriptional repressor activity of SIX3 during retina and lens development. The protein is TLE family member 5 of Homo sapiens (Human).